A 91-amino-acid polypeptide reads, in one-letter code: Small ribosomal subunit protein uS15c (91 aa).

Belongs to the universal ribosomal protein uS15 family. In terms of assembly, part of the 30S ribosomal subunit.

It is found in the plastid. It localises to the chloroplast. This is Small ribosomal subunit protein uS15c (rps15) from Adiantum capillus-veneris (Maidenhair fern).